Here is a 301-residue protein sequence, read N- to C-terminus: Ornithine carbamoyltransferase (301 aa).

Residues arginine 100 and 127–130 each bind carbamoyl phosphate; that span reads HPCQ. Residues asparagine 158, aspartate 221, and 225–226 contribute to the L-ornithine site; that span reads SM. Residues cysteine 260 and arginine 288 each coordinate carbamoyl phosphate.

This sequence belongs to the aspartate/ornithine carbamoyltransferase superfamily. OTCase family. As to quaternary structure, the enzyme is present as a mixture of trimers and dodecamers, with the relative proportions of the two forms depending on the salt concentration. In addition, the trimeric fraction could reassociate into dodecamers when the salt concentration is increased. It appears that in vivo, the main fraction is in the dodecameric form.

It localises to the cytoplasm. It carries out the reaction carbamoyl phosphate + L-ornithine = L-citrulline + phosphate + H(+). It functions in the pathway amino-acid biosynthesis; L-arginine biosynthesis; L-arginine from L-ornithine and carbamoyl phosphate: step 1/3. With respect to regulation, inhibited by excess of arginine and by the bisubstrate delta-N-phosphonoacetyl-L-ornithine (PALO). Reversibly catalyzes the transfer of the carbamoyl group from carbamoyl phosphate (CP) to the N(epsilon) atom of ornithine (ORN) to produce L-citrulline, which is a substrate for argininosuccinate synthetase, the enzyme involved in the final step in arginine biosynthesis. The polypeptide is Ornithine carbamoyltransferase (Moritella abyssi).